The following is a 1361-amino-acid chain: DNA-directed RNA polymerase subunit beta'' (1361 aa).

Zn(2+) contacts are provided by C224, C295, C302, and C305.

Belongs to the RNA polymerase beta' chain family. RpoC2 subfamily. As to quaternary structure, in plastids the minimal PEP RNA polymerase catalytic core is composed of four subunits: alpha, beta, beta', and beta''. When a (nuclear-encoded) sigma factor is associated with the core the holoenzyme is formed, which can initiate transcription. Zn(2+) is required as a cofactor.

The protein resides in the plastid. The protein localises to the chloroplast. The catalysed reaction is RNA(n) + a ribonucleoside 5'-triphosphate = RNA(n+1) + diphosphate. Its function is as follows. DNA-dependent RNA polymerase catalyzes the transcription of DNA into RNA using the four ribonucleoside triphosphates as substrates. This is DNA-directed RNA polymerase subunit beta'' from Spinacia oleracea (Spinach).